Consider the following 1030-residue polypeptide: Isoleucine--tRNA ligase 2 (1030 aa).

The short motif at 48–58 (PFATGLPHYGH) is the 'HIGH' region element. The 'KMSKS' region motif lies at 589–593 (KMSKR). Lysine 592 is a binding site for ATP.

It belongs to the class-I aminoacyl-tRNA synthetase family. IleS type 2 subfamily. Monomer. The cofactor is Zn(2+).

Its subcellular location is the cytoplasm. The enzyme catalyses tRNA(Ile) + L-isoleucine + ATP = L-isoleucyl-tRNA(Ile) + AMP + diphosphate. Catalyzes the attachment of isoleucine to tRNA(Ile). As IleRS can inadvertently accommodate and process structurally similar amino acids such as valine, to avoid such errors it has two additional distinct tRNA(Ile)-dependent editing activities. One activity is designated as 'pretransfer' editing and involves the hydrolysis of activated Val-AMP. The other activity is designated 'posttransfer' editing and involves deacylation of mischarged Val-tRNA(Ile). In terms of biological role, confers high-level resistance to the antibiotic mupirocin (pseudomonic acid A), an Ile-analog produced by P.fluorescens NCIMB 10586 itself that competitively inhibits activation by Ile-tRNA synthetase, thus inhibiting protein biosynthesis. This chain is Isoleucine--tRNA ligase 2 (ileS2), found in Pseudomonas fluorescens.